The primary structure comprises 280 residues: Formamidopyrimidine-DNA glycosylase (280 aa).

Catalysis depends on proline 2, which acts as the Schiff-base intermediate with DNA. The Proton donor role is filled by glutamate 3. Lysine 60 (proton donor; for beta-elimination activity) is an active-site residue. DNA-binding residues include histidine 93 and arginine 112. The FPG-type zinc finger occupies 240-274 (YVYGQHSKPCRVCGADIIKIKVGGRGTHLCPTCQP). The Proton donor; for delta-elimination activity role is filled by arginine 264.

Belongs to the FPG family. As to quaternary structure, monomer. The cofactor is Zn(2+).

The enzyme catalyses Hydrolysis of DNA containing ring-opened 7-methylguanine residues, releasing 2,6-diamino-4-hydroxy-5-(N-methyl)formamidopyrimidine.. It carries out the reaction 2'-deoxyribonucleotide-(2'-deoxyribose 5'-phosphate)-2'-deoxyribonucleotide-DNA = a 3'-end 2'-deoxyribonucleotide-(2,3-dehydro-2,3-deoxyribose 5'-phosphate)-DNA + a 5'-end 5'-phospho-2'-deoxyribonucleoside-DNA + H(+). Involved in base excision repair of DNA damaged by oxidation or by mutagenic agents. Acts as a DNA glycosylase that recognizes and removes damaged bases. Has a preference for oxidized purines, such as 7,8-dihydro-8-oxoguanine (8-oxoG). Has AP (apurinic/apyrimidinic) lyase activity and introduces nicks in the DNA strand. Cleaves the DNA backbone by beta-delta elimination to generate a single-strand break at the site of the removed base with both 3'- and 5'-phosphates. This chain is Formamidopyrimidine-DNA glycosylase, found in Oceanobacillus iheyensis (strain DSM 14371 / CIP 107618 / JCM 11309 / KCTC 3954 / HTE831).